The primary structure comprises 288 residues: Eukaryotic translation initiation factor 3 subunit G (288 aa).

The tract at residues 1–35 is disordered; that stretch reads MSRVANNRDWADDEDLEDSNELPQSTTTTNKDGTQ. The span at 11–20 shows a compositional bias: acidic residues; that stretch reads ADDEDLEDSN. Residues 21 to 35 are compositionally biased toward polar residues; sequence ELPQSTTTTNKDGTQ. Residues 208-286 form the RRM domain; it reads ATLRVTNVSE…LILRVEFAKK (79 aa).

This sequence belongs to the eIF-3 subunit G family. As to quaternary structure, component of the eukaryotic translation initiation factor 3 (eIF-3) complex.

Its subcellular location is the cytoplasm. Functionally, RNA-binding component of the eukaryotic translation initiation factor 3 (eIF-3) complex, which is involved in protein synthesis of a specialized repertoire of mRNAs and, together with other initiation factors, stimulates binding of mRNA and methionyl-tRNAi to the 40S ribosome. The eIF-3 complex specifically targets and initiates translation of a subset of mRNAs involved in cell proliferation. This subunit can bind 18S rRNA. This chain is Eukaryotic translation initiation factor 3 subunit G (tif35), found in Botryotinia fuckeliana (strain B05.10) (Noble rot fungus).